The primary structure comprises 704 residues: Non-sulfated chondroitin lyase E66 (704 aa).

The first 23 residues, 1–23, serve as a signal peptide directing secretion; it reads MSIVLIIVIVVIFLICFLYLSNS. Residues asparagine 236 and histidine 291 each act as proton acceptor in the active site. The active-site Proton donor is tyrosine 299.

The protein belongs to the baculoviridae E66 family.

The protein localises to the virion membrane. It is found in the host nucleus. It localises to the host cytoplasm. In terms of biological role, component of the polyhedra envelope. Plays an essential role in oral infectivity. May digest, with its chondroitin lyase activity, the chondroitin sulfate barrier of the peritrophic matrix of the host midgut to facilitate viral infection in the epithelial cells. The sequence is that of Non-sulfated chondroitin lyase E66 (P79) from Lepidoptera (butterflies and moths).